The following is a 336-amino-acid chain: Dihydroorotate dehydrogenase (quinone) (336 aa).

Residues 62–66 (AGLDK) and Thr-86 contribute to the FMN site. Lys-66 provides a ligand contact to substrate. Residue 111–115 (NRMGF) participates in substrate binding. FMN is bound by residues Asn-139 and Asn-172. Asn-172 contacts substrate. Residue Ser-175 is the Nucleophile of the active site. Substrate is bound at residue Asn-177. 2 residues coordinate FMN: Lys-217 and Thr-245. 246-247 (NT) lines the substrate pocket. FMN is bound by residues Gly-268, Gly-297, and 318 to 319 (YS).

This sequence belongs to the dihydroorotate dehydrogenase family. Type 2 subfamily. In terms of assembly, monomer. Requires FMN as cofactor.

The protein resides in the cell membrane. The enzyme catalyses (S)-dihydroorotate + a quinone = orotate + a quinol. It functions in the pathway pyrimidine metabolism; UMP biosynthesis via de novo pathway; orotate from (S)-dihydroorotate (quinone route): step 1/1. Functionally, catalyzes the conversion of dihydroorotate to orotate with quinone as electron acceptor. This chain is Dihydroorotate dehydrogenase (quinone), found in Psychromonas ingrahamii (strain DSM 17664 / CCUG 51855 / 37).